A 243-amino-acid chain; its full sequence is 3-deoxy-manno-octulosonate cytidylyltransferase (243 aa).

Belongs to the KdsB family.

It localises to the cytoplasm. The catalysed reaction is 3-deoxy-alpha-D-manno-oct-2-ulosonate + CTP = CMP-3-deoxy-beta-D-manno-octulosonate + diphosphate. Its pathway is nucleotide-sugar biosynthesis; CMP-3-deoxy-D-manno-octulosonate biosynthesis; CMP-3-deoxy-D-manno-octulosonate from 3-deoxy-D-manno-octulosonate and CTP: step 1/1. It participates in bacterial outer membrane biogenesis; lipopolysaccharide biosynthesis. Functionally, activates KDO (a required 8-carbon sugar) for incorporation into bacterial lipopolysaccharide in Gram-negative bacteria. The protein is 3-deoxy-manno-octulosonate cytidylyltransferase of Helicobacter pylori (strain ATCC 700392 / 26695) (Campylobacter pylori).